Here is a 328-residue protein sequence, read N- to C-terminus: L-lactate dehydrogenase (328 aa).

NAD(+) contacts are provided by residues V18, E39, K46, Y71, and 85–86 (GA). Substrate contacts are provided by Q88 and R94. Residues S107, 124–126 (AAN), and S149 each bind NAD(+). Substrate is bound at residue 126–129 (NPVD). Position 154–157 (154–157 (DTAR)) interacts with substrate. Residues R159 and H174 each coordinate beta-D-fructose 1,6-bisphosphate. H181 serves as the catalytic Proton acceptor. Y226 is subject to Phosphotyrosine. T235 contacts substrate.

It belongs to the LDH/MDH superfamily. LDH family. Homotetramer.

The protein resides in the cytoplasm. It carries out the reaction (S)-lactate + NAD(+) = pyruvate + NADH + H(+). The protein operates within fermentation; pyruvate fermentation to lactate; (S)-lactate from pyruvate: step 1/1. Allosterically activated by fructose 1,6-bisphosphate (FBP). Its function is as follows. Catalyzes the conversion of lactate to pyruvate. The protein is L-lactate dehydrogenase of Streptococcus mutans serotype c (strain ATCC 700610 / UA159).